The sequence spans 967 residues: Leucine--tRNA ligase (967 aa).

The 'HIGH' region signature appears at 43–53; sequence PYLSGHLHVGH. Residues 650–654 carry the 'KMSKS' region motif; that stretch reads KMSKS. Residue Lys-653 participates in ATP binding.

Belongs to the class-I aminoacyl-tRNA synthetase family.

It is found in the cytoplasm. It carries out the reaction tRNA(Leu) + L-leucine + ATP = L-leucyl-tRNA(Leu) + AMP + diphosphate. This chain is Leucine--tRNA ligase, found in Thermococcus onnurineus (strain NA1).